A 243-amino-acid chain; its full sequence is Flavin-dependent thymidylate synthase (243 aa).

The ThyX domain maps to 2-207 (VKVKLINYTP…ELKPIIEWAK (206 aa)). FAD-binding positions include serine 56, 80–82 (RHR), and glutamine 88. Residues 77-80 (QLVR), 88-92 (QQSQR), and arginine 146 each bind dUMP. The ThyX motif motif lies at 80–90 (RHRIASYTQQS). Residues 162 to 164 (NLR) and histidine 168 contribute to the FAD site. Residue arginine 173 participates in dUMP binding. Catalysis depends on arginine 173, which acts as the Involved in ionization of N3 of dUMP, leading to its activation.

The protein belongs to the thymidylate synthase ThyX family. In terms of assembly, homotetramer. FAD serves as cofactor.

The catalysed reaction is dUMP + (6R)-5,10-methylene-5,6,7,8-tetrahydrofolate + NADPH + H(+) = dTMP + (6S)-5,6,7,8-tetrahydrofolate + NADP(+). It participates in pyrimidine metabolism; dTTP biosynthesis. In terms of biological role, catalyzes the reductive methylation of 2'-deoxyuridine-5'-monophosphate (dUMP) to 2'-deoxythymidine-5'-monophosphate (dTMP) while utilizing 5,10-methylenetetrahydrofolate (mTHF) as the methyl donor, and NADPH and FADH(2) as the reductant. This is Flavin-dependent thymidylate synthase from Pyrococcus horikoshii (strain ATCC 700860 / DSM 12428 / JCM 9974 / NBRC 100139 / OT-3).